Consider the following 458-residue polypeptide: UDP-N-acetylmuramoylalanine--D-glutamate ligase (458 aa).

An ATP-binding site is contributed by 124-130; it reads GSDGKTT.

This sequence belongs to the MurCDEF family.

The protein localises to the cytoplasm. The catalysed reaction is UDP-N-acetyl-alpha-D-muramoyl-L-alanine + D-glutamate + ATP = UDP-N-acetyl-alpha-D-muramoyl-L-alanyl-D-glutamate + ADP + phosphate + H(+). It functions in the pathway cell wall biogenesis; peptidoglycan biosynthesis. Cell wall formation. Catalyzes the addition of glutamate to the nucleotide precursor UDP-N-acetylmuramoyl-L-alanine (UMA). This is UDP-N-acetylmuramoylalanine--D-glutamate ligase from Clostridium botulinum (strain ATCC 19397 / Type A).